A 284-amino-acid chain; its full sequence is NAD kinase (284 aa).

Residue aspartate 70 is the Proton acceptor of the active site. Residues aspartate 70–glycine 71, asparagine 139–glutamate 140, lysine 167, aspartate 169, leucine 177, threonine 180–serine 185, and glutamine 236 each bind NAD(+).

Belongs to the NAD kinase family. Requires a divalent metal cation as cofactor.

The protein resides in the cytoplasm. It carries out the reaction NAD(+) + ATP = ADP + NADP(+) + H(+). In terms of biological role, involved in the regulation of the intracellular balance of NAD and NADP, and is a key enzyme in the biosynthesis of NADP. Catalyzes specifically the phosphorylation on 2'-hydroxyl of the adenosine moiety of NAD to yield NADP. This Helicobacter pylori (strain Shi470) protein is NAD kinase.